We begin with the raw amino-acid sequence, 168 residues long: Ubiquitin-fold modifier-conjugating enzyme 1 (168 aa).

The active-site Glycyl thioester intermediate is the C119.

It belongs to the ubiquitin-conjugating enzyme family. UFC1 subfamily.

Its function is as follows. E2-like enzyme which forms an intermediate with UFM1 via a thioester linkage. In Drosophila grimshawi (Hawaiian fruit fly), this protein is Ubiquitin-fold modifier-conjugating enzyme 1.